The following is a 314-amino-acid chain: 4-hydroxy-3-methylbut-2-enyl diphosphate reductase (314 aa).

C12 provides a ligand contact to [4Fe-4S] cluster. (2E)-4-hydroxy-3-methylbut-2-enyl diphosphate is bound by residues H41 and H74. Positions 41 and 74 each coordinate dimethylallyl diphosphate. 2 residues coordinate isopentenyl diphosphate: H41 and H74. Residue C96 coordinates [4Fe-4S] cluster. (2E)-4-hydroxy-3-methylbut-2-enyl diphosphate is bound at residue H124. H124 contributes to the dimethylallyl diphosphate binding site. Residue H124 participates in isopentenyl diphosphate binding. E126 (proton donor) is an active-site residue. (2E)-4-hydroxy-3-methylbut-2-enyl diphosphate is bound at residue T167. C197 lines the [4Fe-4S] cluster pocket. Residues S225, S226, N227, and S269 each coordinate (2E)-4-hydroxy-3-methylbut-2-enyl diphosphate. Dimethylallyl diphosphate contacts are provided by S225, S226, N227, and S269. Isopentenyl diphosphate-binding residues include S225, S226, N227, and S269.

It belongs to the IspH family. It depends on [4Fe-4S] cluster as a cofactor.

It carries out the reaction isopentenyl diphosphate + 2 oxidized [2Fe-2S]-[ferredoxin] + H2O = (2E)-4-hydroxy-3-methylbut-2-enyl diphosphate + 2 reduced [2Fe-2S]-[ferredoxin] + 2 H(+). It catalyses the reaction dimethylallyl diphosphate + 2 oxidized [2Fe-2S]-[ferredoxin] + H2O = (2E)-4-hydroxy-3-methylbut-2-enyl diphosphate + 2 reduced [2Fe-2S]-[ferredoxin] + 2 H(+). The protein operates within isoprenoid biosynthesis; dimethylallyl diphosphate biosynthesis; dimethylallyl diphosphate from (2E)-4-hydroxy-3-methylbutenyl diphosphate: step 1/1. It functions in the pathway isoprenoid biosynthesis; isopentenyl diphosphate biosynthesis via DXP pathway; isopentenyl diphosphate from 1-deoxy-D-xylulose 5-phosphate: step 6/6. Functionally, catalyzes the conversion of 1-hydroxy-2-methyl-2-(E)-butenyl 4-diphosphate (HMBPP) into a mixture of isopentenyl diphosphate (IPP) and dimethylallyl diphosphate (DMAPP). Acts in the terminal step of the DOXP/MEP pathway for isoprenoid precursor biosynthesis. The sequence is that of 4-hydroxy-3-methylbut-2-enyl diphosphate reductase from Haemophilus ducreyi (strain 35000HP / ATCC 700724).